The primary structure comprises 396 residues: Putative nickel insertion protein (396 aa).

The protein belongs to the LarC family.

This Methanosarcina barkeri (strain Fusaro / DSM 804) protein is Putative nickel insertion protein.